A 241-amino-acid chain; its full sequence is Xyloglucan-specific endo-beta-1,4-glucanase A (241 aa).

Positions 1–16 are cleaved as a signal peptide; the sequence is MKVLALSALLSLASAA. An N-linked (GlcNAc...) asparagine glycan is attached at Asn-47.

The protein belongs to the glycosyl hydrolase 12 (cellulase H) family.

The protein resides in the secreted. It catalyses the reaction xyloglucan + H2O = xyloglucan oligosaccharides.. Its function is as follows. Catalyzes endohydrolysis of 1,4-beta-D-glucosidic linkages in xyloglucan with retention of the beta-configuration of the glycosyl residues. Specific for xyloglucan and does not hydrolyze other cell wall components. The sequence is that of Xyloglucan-specific endo-beta-1,4-glucanase A (xgeA) from Aspergillus niger.